A 284-amino-acid chain; its full sequence is Bifunctional protein FolD (284 aa).

NADP(+) is bound by residues 166-168 (GRS) and serine 191.

This sequence belongs to the tetrahydrofolate dehydrogenase/cyclohydrolase family. Homodimer.

It catalyses the reaction (6R)-5,10-methylene-5,6,7,8-tetrahydrofolate + NADP(+) = (6R)-5,10-methenyltetrahydrofolate + NADPH. The catalysed reaction is (6R)-5,10-methenyltetrahydrofolate + H2O = (6R)-10-formyltetrahydrofolate + H(+). It functions in the pathway one-carbon metabolism; tetrahydrofolate interconversion. Its function is as follows. Catalyzes the oxidation of 5,10-methylenetetrahydrofolate to 5,10-methenyltetrahydrofolate and then the hydrolysis of 5,10-methenyltetrahydrofolate to 10-formyltetrahydrofolate. The chain is Bifunctional protein FolD from Delftia acidovorans (strain DSM 14801 / SPH-1).